Consider the following 403-residue polypeptide: GTPase Obg (403 aa).

One can recognise an Obg domain in the interval 1 to 159 (MKFIDESLIR…RDLLLELMLL (159 aa)). The region spanning 160-333 (ADVGMLGFPN…LCRDIMDFII (174 aa)) is the OBG-type G domain. Residues 166-173 (GFPNAGKS), 191-195 (FTTLV), 213-216 (DIPG), 283-286 (NKID), and 314-316 (SAA) each bind GTP. Residues S173 and T193 each coordinate Mg(2+). The interval 364-403 (YQFDDDEDWDDDWTEEDDDEDWDDDWSEEDDEGIEFIYKP) is disordered. The span at 365-397 (QFDDDEDWDDDWTEEDDDEDWDDDWSEEDDEGI) shows a compositional bias: acidic residues.

It belongs to the TRAFAC class OBG-HflX-like GTPase superfamily. OBG GTPase family. Monomer. Mg(2+) serves as cofactor.

Its subcellular location is the cytoplasm. In terms of biological role, an essential GTPase which binds GTP, GDP and possibly (p)ppGpp with moderate affinity, with high nucleotide exchange rates and a fairly low GTP hydrolysis rate. Plays a role in control of the cell cycle, stress response, ribosome biogenesis and in those bacteria that undergo differentiation, in morphogenesis control. The protein is GTPase Obg of Haemophilus influenzae (strain PittGG).